Consider the following 195-residue polypeptide: Probable nicotinate-nucleotide adenylyltransferase (195 aa).

This sequence belongs to the NadD family.

The enzyme catalyses nicotinate beta-D-ribonucleotide + ATP + H(+) = deamido-NAD(+) + diphosphate. The protein operates within cofactor biosynthesis; NAD(+) biosynthesis; deamido-NAD(+) from nicotinate D-ribonucleotide: step 1/1. Catalyzes the reversible adenylation of nicotinate mononucleotide (NaMN) to nicotinic acid adenine dinucleotide (NaAD). The polypeptide is Probable nicotinate-nucleotide adenylyltransferase (Salinibacter ruber (strain DSM 13855 / M31)).